Consider the following 413-residue polypeptide: Imidazolonepropionase (413 aa).

Residues H77 and H79 each contribute to the Fe(3+) site. Residues H77 and H79 each contribute to the Zn(2+) site. R86, Y149, and H182 together coordinate 4-imidazolone-5-propanoate. Y149 serves as a coordination point for N-formimidoyl-L-glutamate. Residue H247 participates in Fe(3+) binding. H247 serves as a coordination point for Zn(2+). Residue Q250 participates in 4-imidazolone-5-propanoate binding. Residue D322 participates in Fe(3+) binding. D322 is a Zn(2+) binding site. 2 residues coordinate N-formimidoyl-L-glutamate: N324 and G326. A 4-imidazolone-5-propanoate-binding site is contributed by T327.

Belongs to the metallo-dependent hydrolases superfamily. HutI family. Zn(2+) serves as cofactor. Requires Fe(3+) as cofactor.

The protein localises to the cytoplasm. The catalysed reaction is 4-imidazolone-5-propanoate + H2O = N-formimidoyl-L-glutamate. Its pathway is amino-acid degradation; L-histidine degradation into L-glutamate; N-formimidoyl-L-glutamate from L-histidine: step 3/3. Functionally, catalyzes the hydrolytic cleavage of the carbon-nitrogen bond in imidazolone-5-propanoate to yield N-formimidoyl-L-glutamate. It is the third step in the universal histidine degradation pathway. This Chromobacterium violaceum (strain ATCC 12472 / DSM 30191 / JCM 1249 / CCUG 213 / NBRC 12614 / NCIMB 9131 / NCTC 9757 / MK) protein is Imidazolonepropionase.